A 304-amino-acid chain; its full sequence is Urease accessory protein UreD (304 aa).

Belongs to the UreD family. UreD, UreF and UreG form a complex that acts as a GTP-hydrolysis-dependent molecular chaperone, activating the urease apoprotein by helping to assemble the nickel containing metallocenter of UreC. The UreE protein probably delivers the nickel.

It localises to the cytoplasm. In terms of biological role, required for maturation of urease via the functional incorporation of the urease nickel metallocenter. The polypeptide is Urease accessory protein UreD (Haloquadratum walsbyi (strain DSM 16790 / HBSQ001)).